We begin with the raw amino-acid sequence, 378 residues long: Lipid-A-disaccharide synthase (378 aa).

This sequence belongs to the LpxB family.

The catalysed reaction is a lipid X + a UDP-2-N,3-O-bis[(3R)-3-hydroxyacyl]-alpha-D-glucosamine = a lipid A disaccharide + UDP + H(+). It functions in the pathway bacterial outer membrane biogenesis; LPS lipid A biosynthesis. In terms of biological role, condensation of UDP-2,3-diacylglucosamine and 2,3-diacylglucosamine-1-phosphate to form lipid A disaccharide, a precursor of lipid A, a phosphorylated glycolipid that anchors the lipopolysaccharide to the outer membrane of the cell. In Pseudomonas aeruginosa (strain UCBPP-PA14), this protein is Lipid-A-disaccharide synthase.